Consider the following 337-residue polypeptide: Heme A synthase (337 aa).

A run of 7 helical transmembrane segments spans residues 3 to 23 (LARWLWVVAGLVVTIVAIGGI), 94 to 114 (VIGLAFLLPMMWFWIRGMIPA), 120 to 140 (LLALFALICGQGALGWYMVAS), 154 to 174 (LSAHLLTALFLLAGLVWTALD), 191 to 211 (GVAWMASIILFIQILLGAWVA), 248 to 268 (FLLHFLHRWWAWVAVIALVVL), and 289 to 309 (TMVVLGIATVLSEVSLWIAVA). His254 provides a ligand contact to heme. Position 310 (His310) interacts with heme. A helical transmembrane segment spans residues 311-331 (QLTGALLVISTAWAAHAIGTA).

Belongs to the COX15/CtaA family. Type 2 subfamily. As to quaternary structure, interacts with CtaB. The cofactor is heme b.

It is found in the cell membrane. It carries out the reaction Fe(II)-heme o + 2 A + H2O = Fe(II)-heme a + 2 AH2. The protein operates within porphyrin-containing compound metabolism; heme A biosynthesis; heme A from heme O: step 1/1. Its function is as follows. Catalyzes the conversion of heme O to heme A by two successive hydroxylations of the methyl group at C8. The first hydroxylation forms heme I, the second hydroxylation results in an unstable dihydroxymethyl group, which spontaneously dehydrates, resulting in the formyl group of heme A. In Erythrobacter litoralis (strain HTCC2594), this protein is Heme A synthase.